The primary structure comprises 211 residues: uncharacterized protein (211 aa).

Helical transmembrane passes span 77–97 (FLMFHLFCNSALFAVGIAITI), 113–133 (GISVSVWLILAAYMIYWVLIG), 152–172 (ILISMVPNVIFMLVFLFNVIP), and 179–199 (LLTPWFVGTCAFATLLFPLFG).

It localises to the cell membrane. This is an uncharacterized protein from Bacillus subtilis (strain 168).